The following is a 305-amino-acid chain: Dihydroorotate dehydrogenase B (NAD(+)), catalytic subunit (305 aa).

FMN-binding positions include Ser-23 and Lys-47–Gly-48. Substrate contacts are provided by residues Lys-47 and Asn-71–Leu-75. 2 residues coordinate FMN: Asn-101 and Asn-129. Asn-129 is a binding site for substrate. The Nucleophile role is filled by Cys-132. Residues Lys-167 and Ile-193 each contribute to the FMN site. A substrate-binding site is contributed by Asn-194–Thr-195. FMN contacts are provided by residues Gly-219, Gly-245–Gly-246, and Gly-267–Thr-268.

This sequence belongs to the dihydroorotate dehydrogenase family. Type 1 subfamily. In terms of assembly, heterotetramer of 2 PyrK and 2 PyrD type B subunits. It depends on FMN as a cofactor.

The protein resides in the cytoplasm. It carries out the reaction (S)-dihydroorotate + NAD(+) = orotate + NADH + H(+). It functions in the pathway pyrimidine metabolism; UMP biosynthesis via de novo pathway; orotate from (S)-dihydroorotate (NAD(+) route): step 1/1. In terms of biological role, catalyzes the conversion of dihydroorotate to orotate with NAD(+) as electron acceptor. This Geobacter metallireducens (strain ATCC 53774 / DSM 7210 / GS-15) protein is Dihydroorotate dehydrogenase B (NAD(+)), catalytic subunit (pyrD).